A 442-amino-acid polypeptide reads, in one-letter code: Interferon-related developmental regulator 2 (442 aa).

The segment covering 1–15 (MPRARKGNTLRKGGQ) has biased composition (basic residues). The segment at 1-71 (MPRARKGNTL…DVVDEQGQQE (71 aa)) is disordered. The span at 43 to 56 (TASECPSLLSTTAE) shows a compositional bias: polar residues.

Belongs to the IFRD family. In terms of assembly, associates with ribosomes; promoting ribosome inactivation. In terms of tissue distribution, expressed in many tissues including heart, brain, placenta, lung, liver, skeletal muscle, kidney and pancreas.

Its function is as follows. Ribosome-binding protein that acts as an inhibitor of mRNA translation by promoting ribosome inactivation. Associates with the P- and E-sites of the ribosome and inserts a C-terminal helix into the mRNA exit channel to preclude translation. The protein is Interferon-related developmental regulator 2 of Homo sapiens (Human).